Consider the following 55-residue polypeptide: Cytochrome c oxidase subunit 7s (55 aa).

A helical transmembrane segment spans residues Leu-13 to Val-35.

In terms of assembly, slime mold cytochrome c oxidase consists of at least seven different polypeptides species, subunits I, II, III, IV, V, VI, and VIIe/s in order of MW.

It localises to the mitochondrion inner membrane. It carries out the reaction 4 Fe(II)-[cytochrome c] + O2 + 8 H(+)(in) = 4 Fe(III)-[cytochrome c] + 2 H2O + 4 H(+)(out). Its function is as follows. This protein is one of the nuclear-coded polypeptide chains of cytochrome c oxidase, the terminal oxidase in mitochondrial electron transport. The sequence is that of Cytochrome c oxidase subunit 7s (cxgS) from Dictyostelium discoideum (Social amoeba).